A 180-amino-acid polypeptide reads, in one-letter code: Probable phospholipid hydroperoxide glutathione peroxidase (180 aa).

Residue cysteine 54 is part of the active site.

It belongs to the glutathione peroxidase family.

It is found in the cytoplasm. It catalyses the reaction a hydroperoxy polyunsaturated fatty acid + 2 glutathione = a hydroxy polyunsaturated fatty acid + glutathione disulfide + H2O. Its function is as follows. Protects cells and enzymes from oxidative damage, by catalyzing the reduction of hydrogen peroxide, lipid peroxides and organic hydroperoxide, by glutathione. In Helianthus annuus (Common sunflower), this protein is Probable phospholipid hydroperoxide glutathione peroxidase (GPXHA-2).